The chain runs to 96 residues: MLVLVTYDVNTETPAGRRRLRRIAKTCQNYGQRVQFSVFECNVDPAQWVKLRSKLLNEMDPKLDSLRFYFLGSNWQGRVEHEGAKEPRDLEGTLIL.

Aspartate 8 serves as a coordination point for Mg(2+).

This sequence belongs to the CRISPR-associated endoribonuclease Cas2 protein family. In terms of assembly, homodimer, forms a heterotetramer with a Cas1 homodimer. Requires Mg(2+) as cofactor.

Its function is as follows. CRISPR (clustered regularly interspaced short palindromic repeat), is an adaptive immune system that provides protection against mobile genetic elements (viruses, transposable elements and conjugative plasmids). CRISPR clusters contain sequences complementary to antecedent mobile elements and target invading nucleic acids. CRISPR clusters are transcribed and processed into CRISPR RNA (crRNA). Functions as a ssRNA-specific endoribonuclease. Involved in the integration of spacer DNA into the CRISPR cassette. The protein is CRISPR-associated endoribonuclease Cas2 of Chlorobaculum tepidum (strain ATCC 49652 / DSM 12025 / NBRC 103806 / TLS) (Chlorobium tepidum).